A 485-amino-acid chain; its full sequence is Probable glycine dehydrogenase (decarboxylating) subunit 2 (485 aa).

The residue at position 273 (Lys273) is an N6-(pyridoxal phosphate)lysine.

This sequence belongs to the GcvP family. C-terminal subunit subfamily. As to quaternary structure, the glycine cleavage system is composed of four proteins: P, T, L and H. In this organism, the P 'protein' is a heterodimer of two subunits. Pyridoxal 5'-phosphate is required as a cofactor.

The catalysed reaction is N(6)-[(R)-lipoyl]-L-lysyl-[glycine-cleavage complex H protein] + glycine + H(+) = N(6)-[(R)-S(8)-aminomethyldihydrolipoyl]-L-lysyl-[glycine-cleavage complex H protein] + CO2. Functionally, the glycine cleavage system catalyzes the degradation of glycine. The P protein binds the alpha-amino group of glycine through its pyridoxal phosphate cofactor; CO(2) is released and the remaining methylamine moiety is then transferred to the lipoamide cofactor of the H protein. This is Probable glycine dehydrogenase (decarboxylating) subunit 2 from Bacillus licheniformis (strain ATCC 14580 / DSM 13 / JCM 2505 / CCUG 7422 / NBRC 12200 / NCIMB 9375 / NCTC 10341 / NRRL NRS-1264 / Gibson 46).